Here is a 204-residue protein sequence, read N- to C-terminus: Inner membrane-spanning protein YciB (204 aa).

The next 5 membrane-spanning stretches (helical) occupy residues 48–68 (ILFA…LYFF), 73–93 (FESM…ATLM), 102–122 (WKPT…QLFT), 147–167 (GAWI…AYAF), and 170–190 (AVWV…FVVG).

It belongs to the YciB family.

The protein resides in the cell inner membrane. Its function is as follows. Plays a role in cell envelope biogenesis, maintenance of cell envelope integrity and membrane homeostasis. This Nitrosococcus oceani (strain ATCC 19707 / BCRC 17464 / JCM 30415 / NCIMB 11848 / C-107) protein is Inner membrane-spanning protein YciB.